A 406-amino-acid polypeptide reads, in one-letter code: Haptoglobin (406 aa).

The signal sequence occupies residues 1–18 (MSALGAVIALLLWGQLFA). Sushi domains lie at 31-88 (DGCP…ECEA) and 90-147 (DGCP…ECEA). Intrachain disulfides connect cysteine 52-cysteine 86, cysteine 111-cysteine 145, cysteine 149-cysteine 266, cysteine 309-cysteine 340, and cysteine 351-cysteine 381. The region spanning 162–404 (ILGGHLDAKG…IQDWVQKTIA (243 aa)) is the Peptidase S1 domain. Asparagine 184 carries an N-linked (GlcNAc...) (complex) asparagine glycan. Residues asparagine 207 and asparagine 211 are each glycosylated (N-linked (GlcNAc...) asparagine). Asparagine 241 carries N-linked (GlcNAc...) (complex) asparagine glycosylation. Positions 318–323 (VPEKKT) are interaction with CD163.

It belongs to the peptidase S1 family. Tetramer of two alpha and two beta chains; disulfide-linked. The hemoglobin/haptoglobin complex is composed of a haptoglobin dimer bound to two hemoglobin alpha-beta dimers. Interacts with CD163. Interacts with ERGIC3. In terms of tissue distribution, expressed by the liver and secreted in plasma.

The protein localises to the secreted. Functionally, as a result of hemolysis, hemoglobin is found to accumulate in the kidney and is secreted in the urine. Haptoglobin captures, and combines with free plasma hemoglobin to allow hepatic recycling of heme iron and to prevent kidney damage. Haptoglobin also acts as an antioxidant, has antibacterial activity, and plays a role in modulating many aspects of the acute phase response. Hemoglobin/haptoglobin complexes are rapidly cleared by the macrophage CD163 scavenger receptor expressed on the surface of liver Kupfer cells through an endocytic lysosomal degradation pathway. The uncleaved form of allele alpha-2 (2-2), known as zonulin, plays a role in intestinal permeability, allowing intercellular tight junction disassembly, and controlling the equilibrium between tolerance and immunity to non-self antigens. The polypeptide is Haptoglobin (HP) (Homo sapiens (Human)).